The primary structure comprises 307 residues: Serine/threonine-protein phosphatase 4 catalytic subunit (307 aa).

Mn(2+) contacts are provided by Asp-54, His-56, Asp-82, and Asn-114. The active-site Proton donor is the His-115. Residues His-164 and His-238 each coordinate Mn(2+). Leu-307 carries the post-translational modification Leucine methyl ester.

It belongs to the PPP phosphatase family. PP-4 (PP-X) subfamily. Serine/threonine-protein phosphatase 4 (PP4) occurs in different assemblies of the catalytic and one or more regulatory subunits. The cofactor is Mn(2+).

It localises to the cytoplasm. Its subcellular location is the nucleus. The protein resides in the cytoskeleton. The protein localises to the microtubule organizing center. It is found in the centrosome. The catalysed reaction is O-phospho-L-seryl-[protein] + H2O = L-seryl-[protein] + phosphate. It carries out the reaction O-phospho-L-threonyl-[protein] + H2O = L-threonyl-[protein] + phosphate. Protein phosphatase that regulates many processes such as microtubule organization at centrosomes. In Xenopus laevis (African clawed frog), this protein is Serine/threonine-protein phosphatase 4 catalytic subunit (ppp4c).